The sequence spans 148 residues: Large ribosomal subunit protein bL9 (148 aa).

The protein belongs to the bacterial ribosomal protein bL9 family.

Binds to the 23S rRNA. In Bacillus thuringiensis subsp. konkukian (strain 97-27), this protein is Large ribosomal subunit protein bL9.